The primary structure comprises 98 residues: NADH-ubiquinone oxidoreductase chain 4L (98 aa).

Helical transmembrane passes span 1-21 (MTLV…GLLM), 26-46 (LMSA…LATI), and 59-79 (MPII…ALLV).

The protein belongs to the complex I subunit 4L family. As to quaternary structure, core subunit of respiratory chain NADH dehydrogenase (Complex I) which is composed of 45 different subunits.

It is found in the mitochondrion inner membrane. The catalysed reaction is a ubiquinone + NADH + 5 H(+)(in) = a ubiquinol + NAD(+) + 4 H(+)(out). Core subunit of the mitochondrial membrane respiratory chain NADH dehydrogenase (Complex I) which catalyzes electron transfer from NADH through the respiratory chain, using ubiquinone as an electron acceptor. Part of the enzyme membrane arm which is embedded in the lipid bilayer and involved in proton translocation. The sequence is that of NADH-ubiquinone oxidoreductase chain 4L (MT-ND4L) from Pontoporia blainvillei (Franciscana).